A 92-amino-acid polypeptide reads, in one-letter code: MTEAAQTEKSLRRTLVGRVVSDKMDKTVTVLVENRVKHPLYGKYVLRSKKYHAHDEANQYKEGDKVEIQEGRPLSRTKSWVVSRLVEAARVI.

This sequence belongs to the universal ribosomal protein uS17 family. Part of the 30S ribosomal subunit.

In terms of biological role, one of the primary rRNA binding proteins, it binds specifically to the 5'-end of 16S ribosomal RNA. The polypeptide is Small ribosomal subunit protein uS17 (Cupriavidus necator (strain ATCC 17699 / DSM 428 / KCTC 22496 / NCIMB 10442 / H16 / Stanier 337) (Ralstonia eutropha)).